Reading from the N-terminus, the 91-residue chain is Probable Fe(2+)-trafficking protein (91 aa).

It belongs to the Fe(2+)-trafficking protein family. As to quaternary structure, monomer.

In terms of biological role, could be a mediator in iron transactions between iron acquisition and iron-requiring processes, such as synthesis and/or repair of Fe-S clusters in biosynthetic enzymes. In Escherichia coli O6:H1 (strain CFT073 / ATCC 700928 / UPEC), this protein is Probable Fe(2+)-trafficking protein.